We begin with the raw amino-acid sequence, 124 residues long: 5-hydroxyisourate hydrolase (124 aa).

Positions 15, 53, and 121 each coordinate substrate.

It belongs to the transthyretin family. 5-hydroxyisourate hydrolase subfamily. In terms of assembly, homotetramer.

The catalysed reaction is 5-hydroxyisourate + H2O = 5-hydroxy-2-oxo-4-ureido-2,5-dihydro-1H-imidazole-5-carboxylate + H(+). Functionally, catalyzes the hydrolysis of 5-hydroxyisourate (HIU) to 2-oxo-4-hydroxy-4-carboxy-5-ureidoimidazoline (OHCU). The chain is 5-hydroxyisourate hydrolase from Mesorhizobium japonicum (strain LMG 29417 / CECT 9101 / MAFF 303099) (Mesorhizobium loti (strain MAFF 303099)).